The sequence spans 378 residues: Dihydroorotate dehydrogenase (quinone) (378 aa).

Residues 77-81 (AGFDK) and Thr101 each bind FMN. Lys81 lines the substrate pocket. 126 to 130 (NRMGF) serves as a coordination point for substrate. Asn158 and Asn191 together coordinate FMN. A substrate-binding site is contributed by Asn191. The active-site Nucleophile is Ser194. Position 196 (Asn196) interacts with substrate. Residues Lys229 and Thr257 each coordinate FMN. 258–259 (NT) provides a ligand contact to substrate. FMN contacts are provided by residues Gly287, Gly316, and 337-338 (YT).

Belongs to the dihydroorotate dehydrogenase family. Type 2 subfamily. In terms of assembly, monomer. It depends on FMN as a cofactor.

The protein resides in the cell membrane. The enzyme catalyses (S)-dihydroorotate + a quinone = orotate + a quinol. The protein operates within pyrimidine metabolism; UMP biosynthesis via de novo pathway; orotate from (S)-dihydroorotate (quinone route): step 1/1. In terms of biological role, catalyzes the conversion of dihydroorotate to orotate with quinone as electron acceptor. This is Dihydroorotate dehydrogenase (quinone) from Synechococcus sp. (strain ATCC 27144 / PCC 6301 / SAUG 1402/1) (Anacystis nidulans).